Reading from the N-terminus, the 174-residue chain is Protein GrpE (174 aa).

The interval 1-35 (MAQDIKNEEVEEVQEEEVVETAEETTPEKSELDLA) is disordered. A compositionally biased stretch (acidic residues) spans 9 to 25 (EVEEVQEEEVVETAEET). The segment covering 26–35 (TPEKSELDLA) has biased composition (basic and acidic residues).

Belongs to the GrpE family. As to quaternary structure, homodimer.

Its subcellular location is the cytoplasm. Participates actively in the response to hyperosmotic and heat shock by preventing the aggregation of stress-denatured proteins, in association with DnaK and GrpE. It is the nucleotide exchange factor for DnaK and may function as a thermosensor. Unfolded proteins bind initially to DnaJ; upon interaction with the DnaJ-bound protein, DnaK hydrolyzes its bound ATP, resulting in the formation of a stable complex. GrpE releases ADP from DnaK; ATP binding to DnaK triggers the release of the substrate protein, thus completing the reaction cycle. Several rounds of ATP-dependent interactions between DnaJ, DnaK and GrpE are required for fully efficient folding. In Streptococcus pneumoniae (strain ATCC 700669 / Spain 23F-1), this protein is Protein GrpE.